A 540-amino-acid polypeptide reads, in one-letter code: Chaperonin GroEL (540 aa).

Residues 29 to 32 (TIGP), 86 to 90 (DGTTT), G413, 476 to 478 (NAA), and D492 each bind ATP.

It belongs to the chaperonin (HSP60) family. In terms of assembly, forms a cylinder of 14 subunits composed of two heptameric rings stacked back-to-back. Interacts with the co-chaperonin GroES.

Its subcellular location is the cytoplasm. The catalysed reaction is ATP + H2O + a folded polypeptide = ADP + phosphate + an unfolded polypeptide.. Functionally, together with its co-chaperonin GroES, plays an essential role in assisting protein folding. The GroEL-GroES system forms a nano-cage that allows encapsulation of the non-native substrate proteins and provides a physical environment optimized to promote and accelerate protein folding. The protein is Chaperonin GroEL of Staphylococcus saprophyticus subsp. saprophyticus (strain ATCC 15305 / DSM 20229 / NCIMB 8711 / NCTC 7292 / S-41).